The chain runs to 373 residues: Chaperone protein DnaJ (373 aa).

The J domain maps to 5–70; it reads DFYATLGVAR…EKRAMYDQYG (66 aa). A CR-type zinc finger spans residues 134–212; the sequence is GVKKRINIPT…CRGAGRNKAV (79 aa). Zn(2+) contacts are provided by Cys147, Cys150, Cys164, Cys167, Cys186, Cys189, Cys200, and Cys203. CXXCXGXG motif repeat units follow at residues 147 to 154, 164 to 171, 186 to 193, and 200 to 207; these read CDVCNGSG, CPTCKGSG, CPTCHGAG, and CVKCRGAG.

It belongs to the DnaJ family. As to quaternary structure, homodimer. Zn(2+) is required as a cofactor.

It is found in the cytoplasm. In terms of biological role, participates actively in the response to hyperosmotic and heat shock by preventing the aggregation of stress-denatured proteins and by disaggregating proteins, also in an autonomous, DnaK-independent fashion. Unfolded proteins bind initially to DnaJ; upon interaction with the DnaJ-bound protein, DnaK hydrolyzes its bound ATP, resulting in the formation of a stable complex. GrpE releases ADP from DnaK; ATP binding to DnaK triggers the release of the substrate protein, thus completing the reaction cycle. Several rounds of ATP-dependent interactions between DnaJ, DnaK and GrpE are required for fully efficient folding. Also involved, together with DnaK and GrpE, in the DNA replication of plasmids through activation of initiation proteins. The chain is Chaperone protein DnaJ from Neisseria meningitidis serogroup C (strain 053442).